Reading from the N-terminus, the 703-residue chain is Antigen peptide transporter 2 (703 aa).

Residues methionine 1 to proline 6 are Lumenal-facing. A helical transmembrane segment spans residues arginine 7–leucine 27. The Cytoplasmic segment spans residues glycine 28–glycine 56. Residues glycine 57–phenylalanine 77 form a helical membrane-spanning segment. Over serine 78–serine 98 the chain is Lumenal. Residues tryptophan 99 to leucine 119 form a helical membrane-spanning segment. At serine 120–aspartate 148 the chain is on the cytoplasmic side. Residues leucine 149 to isoleucine 169 form a helical membrane-spanning segment. Residues leucine 152–serine 435 form the ABC transmembrane type-1 domain. Topologically, residues proline 170–aspartate 187 are lumenal. A helical membrane pass occupies residues alanine 188–glycine 208. Residues cysteine 209–leucine 266 are Cytoplasmic-facing. The chain crosses the membrane as a helical span at residues asparagine 267–glutamine 287. At valine 288–threonine 293 the chain is on the lumenal side. The chain crosses the membrane as a helical span at residues phenylalanine 294 to histidine 314. The segment at proline 301 to valine 389 is part of the peptide-binding site. Topologically, residues glutamine 315–serine 374 are cytoplasmic. Residues leucine 375–glycine 395 form a helical membrane-spanning segment. The Lumenal portion of the chain corresponds to valine 396–glycine 408. Residues leucine 409 to methionine 429 form a helical membrane-spanning segment. A part of the peptide-binding site region spans residues leucine 414–methionine 433. The Cytoplasmic segment spans residues tyrosine 430–alanine 703. One can recognise an ABC transporter domain in the interval valine 468–glutamate 702. Residue glycine 503 to serine 510 participates in ATP binding.

It belongs to the ABC transporter superfamily. ABCB family. MHC peptide exporter (TC 3.A.1.209) subfamily. In terms of assembly, heterodimer of TAP1 and TAP2 (TAP1-TAP2). A component of the peptide loading complex (PLC), interacts via TAPBP with MHCI heterodimer; this interaction mediates peptide-MHCI assembly. Mg(2+) serves as cofactor.

It is found in the endoplasmic reticulum membrane. The enzyme catalyses a peptide antigen(in) + ATP + H2O = a peptide antigen(out) + ADP + phosphate + H(+). In terms of biological role, ABC transporter associated with antigen processing. In complex with TAP1 mediates unidirectional translocation of peptide antigens from cytosol to endoplasmic reticulum (ER) for loading onto MHC class I (MHCI) molecules. Uses the chemical energy of ATP to export peptides against the concentration gradient. During the transport cycle alternates between 'inward-facing' state with peptide binding site facing the cytosol to 'outward-facing' state with peptide binding site facing the ER lumen. Peptide antigen binding to ATP-loaded TAP1-TAP2 induces a switch to hydrolysis-competent 'outward-facing' conformation ready for peptide loading onto nascent MHCI molecules. Subsequently ATP hydrolysis resets the transporter to the 'inward facing' state for a new cycle. As a component of the peptide loading complex (PLC), acts as a molecular scaffold essential for peptide-MHCI assembly and antigen presentation. The sequence is that of Antigen peptide transporter 2 (Tap2) from Rattus norvegicus (Rat).